We begin with the raw amino-acid sequence, 418 residues long: ATP-dependent Clp protease ATP-binding subunit ClpX (418 aa).

The 54-residue stretch at 1-54 (MTRKDDESDQFFCSFCGKNQKEVKKLIAGPSVYICNECVSLCEEIIEDEDKESL) folds into the ClpX-type ZB domain. Residues cysteine 13, cysteine 16, cysteine 35, and cysteine 38 each coordinate Zn(2+). 120–127 (PTGCGKTL) provides a ligand contact to ATP.

Belongs to the ClpX chaperone family. In terms of assembly, component of the ClpX-ClpP complex. Forms a hexameric ring that, in the presence of ATP, binds to fourteen ClpP subunits assembled into a disk-like structure with a central cavity, resembling the structure of eukaryotic proteasomes.

Its function is as follows. ATP-dependent specificity component of the Clp protease. It directs the protease to specific substrates. Can perform chaperone functions in the absence of ClpP. The protein is ATP-dependent Clp protease ATP-binding subunit ClpX of Desulforapulum autotrophicum (strain ATCC 43914 / DSM 3382 / VKM B-1955 / HRM2) (Desulfobacterium autotrophicum).